Reading from the N-terminus, the 392-residue chain is ATP phosphoribosyltransferase regulatory subunit (392 aa).

The protein belongs to the class-II aminoacyl-tRNA synthetase family. HisZ subfamily. Heteromultimer composed of HisG and HisZ subunits.

Its subcellular location is the cytoplasm. It participates in amino-acid biosynthesis; L-histidine biosynthesis; L-histidine from 5-phospho-alpha-D-ribose 1-diphosphate: step 1/9. Its function is as follows. Required for the first step of histidine biosynthesis. May allow the feedback regulation of ATP phosphoribosyltransferase activity by histidine. The chain is ATP phosphoribosyltransferase regulatory subunit from Synechococcus sp. (strain WH7803).